The chain runs to 149 residues: MHCPFCGANDTKVIDSRLVADGHQVRRRRQCLACNERYTTFETAELVMPRVIKTDGNRDSFNEDKLRGGIQRALEKRPVSADDIERAINTIKSRLRATGEREVPSDMIGNLVMEALKELDKVAYIRFASVYRSFEDIREFGEEIAKLEK.

A zinc finger lies at Cys-3 to Cys-34. Residues Pro-49–Glu-139 enclose the ATP-cone domain.

The protein belongs to the NrdR family. Zn(2+) serves as cofactor.

Functionally, negatively regulates transcription of bacterial ribonucleotide reductase nrd genes and operons by binding to NrdR-boxes. The protein is Transcriptional repressor NrdR of Photobacterium profundum (strain SS9).